The sequence spans 393 residues: Formate-dependent phosphoribosylglycinamide formyltransferase (393 aa).

Residues 22–23 (EL) and Glu82 contribute to the N(1)-(5-phospho-beta-D-ribosyl)glycinamide site. ATP is bound by residues Arg114, Lys155, 160–165 (SSGHGQ), 195–198 (EGFV), and Glu203. In terms of domain architecture, ATP-grasp spans 119–308 (RLAAEELGLP…QFALHARAVL (190 aa)). Residues Glu267 and Glu279 each contribute to the Mg(2+) site. N(1)-(5-phospho-beta-D-ribosyl)glycinamide contacts are provided by residues Asp286, Lys356, and 363 to 364 (RR).

This sequence belongs to the PurK/PurT family. As to quaternary structure, homodimer.

It catalyses the reaction N(1)-(5-phospho-beta-D-ribosyl)glycinamide + formate + ATP = N(2)-formyl-N(1)-(5-phospho-beta-D-ribosyl)glycinamide + ADP + phosphate + H(+). It participates in purine metabolism; IMP biosynthesis via de novo pathway; N(2)-formyl-N(1)-(5-phospho-D-ribosyl)glycinamide from N(1)-(5-phospho-D-ribosyl)glycinamide (formate route): step 1/1. Its function is as follows. Involved in the de novo purine biosynthesis. Catalyzes the transfer of formate to 5-phospho-ribosyl-glycinamide (GAR), producing 5-phospho-ribosyl-N-formylglycinamide (FGAR). Formate is provided by PurU via hydrolysis of 10-formyl-tetrahydrofolate. In Parabacteroides distasonis (strain ATCC 8503 / DSM 20701 / CIP 104284 / JCM 5825 / NCTC 11152), this protein is Formate-dependent phosphoribosylglycinamide formyltransferase.